A 117-amino-acid polypeptide reads, in one-letter code: Large ribosomal subunit protein uL18 (117 aa).

It belongs to the universal ribosomal protein uL18 family. Part of the 50S ribosomal subunit; part of the 5S rRNA/L5/L18/L25 subcomplex. Contacts the 5S and 23S rRNAs.

Functionally, this is one of the proteins that bind and probably mediate the attachment of the 5S RNA into the large ribosomal subunit, where it forms part of the central protuberance. The chain is Large ribosomal subunit protein uL18 from Laribacter hongkongensis (strain HLHK9).